The chain runs to 98 residues: NADH-ubiquinone oxidoreductase chain 4L (98 aa).

3 helical membrane-spanning segments follow: residues 1–21 (MSLV…GLLM), 29–49 (SLLC…LTIL), and 61–81 (IILL…LVMV).

The protein belongs to the complex I subunit 4L family. In terms of assembly, core subunit of respiratory chain NADH dehydrogenase (Complex I) which is composed of 45 different subunits.

The protein resides in the mitochondrion inner membrane. The enzyme catalyses a ubiquinone + NADH + 5 H(+)(in) = a ubiquinol + NAD(+) + 4 H(+)(out). Its function is as follows. Core subunit of the mitochondrial membrane respiratory chain NADH dehydrogenase (Complex I) which catalyzes electron transfer from NADH through the respiratory chain, using ubiquinone as an electron acceptor. Part of the enzyme membrane arm which is embedded in the lipid bilayer and involved in proton translocation. This Muntiacus vuquangensis (Giant muntjac) protein is NADH-ubiquinone oxidoreductase chain 4L (MT-ND4L).